Consider the following 345-residue polypeptide: MSNMMKALVKSKPEVGLWMENVPVPEVGPNDVLIRVKKSAICGTDVHIWNWDQWAQKTIPVPMVVGHEFSGEIAEIGSAVTRYHVGERVSGEGHIVCGKCRNCRAGRGHLCRNTLGVGVNRPGSFGEFVCIPESNVVPIPDDISDEIAAIFDPFGNAVHTALSFDLVGEDVLVTGAGPIGIMGALVAKRSGARKVVITDINPHRLDLARKLGIDHVVDASKENLADVMKAIGMTEGFDVGLEMSGAAPAFRDMIDKMNNGGKIAILGIAPAGFEIDWNKVIFKMLNLKGIYGREMFETWYKMIAFVQGGLDLSPIITHRIKIDDFRDGFEAMRSGNSGKVVMDWM.

C42 provides a ligand contact to Zn(2+). Active-site charge relay system residues include T44 and H47. Residues H67, E68, C97, C100, C103, and C111 each contribute to the Zn(2+) site. NAD(+) contacts are provided by residues I179, D199, R204, 266–268, and 290–291; these read LGI and IY.

The protein belongs to the zinc-containing alcohol dehydrogenase family. In terms of assembly, homotetramer. Requires Zn(2+) as cofactor.

The protein localises to the cytoplasm. It catalyses the reaction L-threonine + NAD(+) = (2S)-2-amino-3-oxobutanoate + NADH + H(+). Its pathway is amino-acid degradation; L-threonine degradation via oxydo-reductase pathway; glycine from L-threonine: step 1/2. Functionally, catalyzes the NAD(+)-dependent oxidation of L-threonine to 2-amino-3-ketobutyrate. This Rhizobium etli (strain ATCC 51251 / DSM 11541 / JCM 21823 / NBRC 15573 / CFN 42) protein is L-threonine 3-dehydrogenase.